Consider the following 457-residue polypeptide: Tryptophan aminotransferase-related protein 3 (457 aa).

A helical membrane pass occupies residues 6-26; it reads LLIAGSIILNLVFTIHILYNN. Pyridoxal 5'-phosphate-binding positions include Tyr-123, 163-164, Asn-237, 257-260, 280-283, and Arg-291; these read AT, DYAY, and SLSK. Residue Lys-283 is modified to N6-(pyridoxal phosphate)lysine.

The protein belongs to the alliinase family. The cofactor is pyridoxal 5'-phosphate.

It is found in the membrane. In terms of biological role, probable aminotransferase. This is Tryptophan aminotransferase-related protein 3 (TAR3) from Arabidopsis thaliana (Mouse-ear cress).